The primary structure comprises 243 residues: DNA repair protein RecO (243 aa).

This sequence belongs to the RecO family.

Involved in DNA repair and RecF pathway recombination. The protein is DNA repair protein RecO of Serratia proteamaculans (strain 568).